The chain runs to 605 residues: Sodium-independent sulfate anion transporter (605 aa).

Residues 1–50 (MPSSLKGLGQAWLSSSSMALSACCSVSAWQKRLPVLAWLPRYSLQWLKMD) are Extracellular-facing. The helical transmembrane segment at 51–71 (FIAGLSVGLTVIPQALAYAEV) threads the bilayer. A topological domain (cytoplasmic) is located at residue A72. The helical transmembrane segment at 73–93 (GLPPQYGLYSAFTGCFVYVFL) threads the bilayer. Residues 94–98 (GTSRD) are Extracellular-facing. Residues 99 to 119 (VTLGPTAIMSLLVSFYTFHEP) traverse the membrane as a helical segment. The Cytoplasmic segment spans residues 120–122 (AYA). A helical transmembrane segment spans residues 123–143 (VLLTFLSGCIQLAMGLLHLGF). Residues 144 to 146 (LLD) are Extracellular-facing. A helical membrane pass occupies residues 147–167 (FISCPVIKGFTSAAAIIIGFG). Residues 168–196 (QIKNLLGLHNIPRQFFLQVYHTFLSVGET) are Cytoplasmic-facing. Residues 197-217 (RLGDAILGLVCMVLLLVLKLM) form a helical membrane-spanning segment. Over 218–249 (RDRIPPVHPEMPLCVRLSCGLVWTTATARNAL) the chain is Extracellular. The helical transmembrane segment at 250 to 270 (VVSFAALVAYSFEVTGYQPFI) threads the bilayer. At 271 to 303 (LTGEIAKGLPPVRVPPFSVTMANGTVSFTRMVQ) the chain is on the cytoplasmic side. A helical membrane pass occupies residues 304 to 324 (DLGAGLAVVPLIGLLESIAVA). Topologically, residues 325–340 (KAFASQNDYHVDANQE) are extracellular. Residues 341 to 361 (LLAIGLTNMLGSFVSSYPITG) form a helical membrane-spanning segment. Residues 362–373 (SFGRTAVNAQSG) are Cytoplasmic-facing. The helical transmembrane segment at 374 to 394 (VCTPAGGLVTGALVLLSLDYL) threads the bilayer. The Extracellular portion of the chain corresponds to 395 to 397 (TSL). Residues 398–418 (FYYIPKAALAAVIIMAVVPLF) traverse the membrane as a helical segment. Topologically, residues 419 to 447 (DTKIFGMLWRVKRLDLLPLCATFLLCFWE) are cytoplasmic. The helical transmembrane segment at 448–468 (VQYGILAGTLVSTLFLLHFVA) threads the bilayer. Over 469–605 (RPKTQVSEGP…PEHKVTLLTA (137 aa)) the chain is Extracellular. An STAS domain is found at 479-582 (VLILQLASGL…EKAEQYVRQE (104 aa)).

The protein belongs to the SLC26A/SulP transporter (TC 2.A.53) family.

The protein resides in the cell membrane. Its subcellular location is the lysosome membrane. The protein localises to the apical cell membrane. It localises to the basolateral cell membrane. The enzyme catalyses hydrogencarbonate(in) + chloride(out) = hydrogencarbonate(out) + chloride(in). It carries out the reaction sulfate(in) + H(+)(in) = sulfate(out) + H(+)(out). The catalysed reaction is oxalate(in) + chloride(out) = oxalate(out) + chloride(in). In terms of biological role, sodium-independent anion exchanger mediating bicarbonate, chloride, sulfate and oxalate transport. Exhibits sodium-independent sulfate anion transporter activity that may cooperate with SLC26A2 to mediate DIDS-sensitive sulfate uptake into high endothelial venules endothelial cells (HEVEC). In the kidney, mediates chloride-bicarbonate exchange, facilitating V-ATPase-mediated acid secretion. May function as a chloride channel, playing an important role in moderating chloride homeostasis and neuronal activity in the cerebellum. This chain is Sodium-independent sulfate anion transporter (Slc26a11), found in Cavia porcellus (Guinea pig).